The following is a 272-amino-acid chain: HMP-PP phosphatase (272 aa).

D8 (nucleophile) is an active-site residue. Mg(2+) contacts are provided by D8, D10, and D212.

This sequence belongs to the HAD-like hydrolase superfamily. Cof family. Mg(2+) serves as cofactor.

The catalysed reaction is 4-amino-2-methyl-5-(diphosphooxymethyl)pyrimidine + H2O = 4-amino-2-methyl-5-(phosphooxymethyl)pyrimidine + phosphate + H(+). Its function is as follows. Catalyzes the hydrolysis of 4-amino-2-methyl-5-hydroxymethylpyrimidine pyrophosphate (HMP-PP) to 4-amino-2-methyl-5-hydroxymethylpyrimidine phosphate (HMP-P). This Shigella flexneri serotype 5b (strain 8401) protein is HMP-PP phosphatase.